An 81-amino-acid polypeptide reads, in one-letter code: uncharacterized protein (81 aa).

This is an uncharacterized protein from Saccharomyces cerevisiae (strain ATCC 204508 / S288c) (Baker's yeast).